An 805-amino-acid polypeptide reads, in one-letter code: Leucine--tRNA ligase (805 aa).

The 'HIGH' region signature appears at 40–51 (PYPSGSGLHVGH). A 'KMSKS' region motif is present at residues 576-580 (KMSKS). Lys579 contacts ATP.

It belongs to the class-I aminoacyl-tRNA synthetase family.

The protein localises to the cytoplasm. The catalysed reaction is tRNA(Leu) + L-leucine + ATP = L-leucyl-tRNA(Leu) + AMP + diphosphate. This chain is Leucine--tRNA ligase, found in Chlorobium chlorochromatii (strain CaD3).